The sequence spans 359 residues: Probable cinnamyl alcohol dehydrogenase 8A (359 aa).

Cys-45 is a binding site for Zn(2+). Residue Thr-47 coordinates NADP(+). 7 residues coordinate Zn(2+): His-67, Glu-68, Cys-98, Cys-101, Cys-104, Cys-112, and Cys-161. NADP(+) contacts are provided by residues Thr-165, 186–191 (GLGGLG), 209–214 (SSSPAK), Thr-249, Gly-273, and 296–298 (SGG).

Belongs to the zinc-containing alcohol dehydrogenase family. As to quaternary structure, homodimer. Requires Zn(2+) as cofactor.

The catalysed reaction is (E)-cinnamyl alcohol + NADP(+) = (E)-cinnamaldehyde + NADPH + H(+). The enzyme catalyses (E)-coniferol + NADP(+) = (E)-coniferaldehyde + NADPH + H(+). It carries out the reaction (E)-sinapyl alcohol + NADP(+) = (E)-sinapaldehyde + NADPH + H(+). It catalyses the reaction (E)-4-coumaroyl alcohol + NADP(+) = (E)-4-coumaraldehyde + NADPH + H(+). The catalysed reaction is (E)-caffeyl alcohol + NADP(+) = (E)-caffeyl aldehyde + NADPH + H(+). It functions in the pathway aromatic compound metabolism; phenylpropanoid biosynthesis. Involved in lignin biosynthesis. Catalyzes the final step specific for the production of lignin monomers. Catalyzes the NADPH-dependent reduction of coniferaldehyde, 5-hydroxyconiferaldehyde, sinapaldehyde, 4-coumaraldehyde and caffeyl aldehyde to their respective alcohols. The polypeptide is Probable cinnamyl alcohol dehydrogenase 8A (Oryza sativa subsp. japonica (Rice)).